Reading from the N-terminus, the 365-residue chain is MDIIETAKLEGHLESQTNDSTNTYTSPTEAVEEEGKNGKGKPKTLSNGLRKGAKKYPDYIQISMPNDSKNKFPLEWWKTGIAFVYALFNLILTTVMITVVHERVPPKELSPPLPDKFFDYFDRVKWAFSVSEINGMVLVGLWITQWLFLRYKSIVGRRFFFIMGTLYLYRCITMYVTTLPVPGMHFQCAPKLNGDSQAKIQRILRLISGGGLSITGSHILCGDFLFSGHTVVLTLTYLFIKEYSPRHFWWYHLVCWLLSAAGIICILVAHEHYTVDVIIAYYITTRLFWWYHSMANEKNLKVSSQTNFLSRAWWFPIFYFFEKNVQGSIPCCFSWPLSWPPGCFKSSCRKYSRVQKIGEDNEKST.

A disordered region spans residues 9 to 50; sequence LEGHLESQTNDSTNTYTSPTEAVEEEGKNGKGKPKTLSNGLR. Residues 14–28 are compositionally biased toward polar residues; the sequence is ESQTNDSTNTYTSPT. 5 helical membrane-spanning segments follow: residues 80–100, 128–148, 159–179, 219–239, and 248–268; these read GIAF…ITVV, FSVS…QWLF, FFFI…VTTL, ILCG…TYLF, and FWWY…CILV. His-229 is a catalytic residue. Catalysis depends on residues His-272 and Asp-276. Residues 273 to 290 traverse the membrane as a helical segment; the sequence is YTVDVIIAYYITTRLFWW. The Cytoplasmic segment spans residues 291–365; the sequence is YHSMANEKNL…KIGEDNEKST (75 aa). 4 S-palmitoyl cysteine lipidation sites follow: Cys-331, Cys-332, Cys-343, and Cys-348.

The protein belongs to the sphingomyelin synthase family. In terms of processing, palmitoylated on Cys-331, Cys-332, Cys-343 and Cys-348; which plays an important role in plasma membrane localization. In terms of tissue distribution, highest expression is detected in cortical bone, followed by vertebrae, kidney and liver. Expression levels are very low in spleen, muscle, heart, brown fat and thymus. Expressed in macrophages.

It localises to the cell membrane. Its subcellular location is the golgi apparatus membrane. The enzyme catalyses an N-acylsphing-4-enine + a 1,2-diacyl-sn-glycero-3-phosphocholine = a sphingomyelin + a 1,2-diacyl-sn-glycerol. The catalysed reaction is an N-acylsphinganine + a 1,2-diacyl-sn-glycero-3-phosphocholine = an N-acylsphinganine-1-phosphocholine + a 1,2-diacyl-sn-glycerol. It catalyses the reaction an N-acyl-(4R)-4-hydroxysphinganine + a 1,2-diacyl-sn-glycero-3-phosphocholine = an N-acyl-(4R)-4-hydroxysphinganine-phosphocholine + a 1,2-diacyl-sn-glycerol. It carries out the reaction an N-acylsphing-4-enine + a 1,2-diacyl-sn-glycero-3-phosphoethanolamine = an N-acylsphing-4-enine 1-phosphoethanolamine + a 1,2-diacyl-sn-glycerol. The enzyme catalyses an N-acylsphinganine + a 1,2-diacyl-sn-glycero-3-phosphoethanolamine = an N-acylsphinganine-1-phosphoethanolamine + a 1,2-diacyl-sn-glycerol. The catalysed reaction is an N-acyl-(4R)-4-hydroxysphinganine + a 1,2-diacyl-sn-glycero-3-phosphoethanolamine = an N-acyl-(4R)-4-hydroxysphinganine-1-phosphoethanolamine + a 1,2-diacyl-sn-glycerol. It catalyses the reaction 1,2-dihexadecanoyl-sn-glycero-3-phosphocholine + an N-acylsphing-4-enine = 1,2-dihexadecanoyl-sn-glycerol + a sphingomyelin. It carries out the reaction 1-(9Z-octadecenoyl)-2-acyl-sn-3-glycerol + a sphingomyelin = a 1-(9Z-octadecenoyl)-2-acyl-sn-glycero-3-phosphocholine + an N-acylsphing-4-enine. The enzyme catalyses N-hexadecanoylsphinganine + a 1,2-diacyl-sn-glycero-3-phosphocholine = N-hexadecanoyl-sphinganine-1-phosphocholine + a 1,2-diacyl-sn-glycerol. The catalysed reaction is N-hexadecanoyl-(4R)-hydroxysphinganine + a 1,2-diacyl-sn-glycero-3-phosphocholine = N-hexadecanoyl-(4R)-hydroxysphinganine-phosphocholine + a 1,2-diacyl-sn-glycerol. It catalyses the reaction N-hexadecanoylsphinganine + a 1,2-diacyl-sn-glycero-3-phosphoethanolamine = N-hexadecanoyl-sphinganine-1-phosphoethanolamine + a 1,2-diacyl-sn-glycerol. It carries out the reaction N-hexadecanoyl-(4R)-hydroxysphinganine + a 1,2-diacyl-sn-glycero-3-phosphoethanolamine = N-hexadecanoyl-(4R)-hydroxysphinganine-1-phosphoethanolamine + a 1,2-diacyl-sn-glycerol. It functions in the pathway sphingolipid metabolism. Its function is as follows. Sphingomyelin synthase that primarily contributes to sphingomyelin synthesis and homeostasis at the plasma membrane. Catalyzes the reversible transfer of phosphocholine moiety in sphingomyelin biosynthesis: in the forward reaction transfers phosphocholine head group of phosphatidylcholine (PC) on to ceramide (CER) to form ceramide phosphocholine (sphingomyelin, SM) and diacylglycerol (DAG) as by-product, and in the reverse reaction transfers phosphocholine from SM to DAG to form PC and CER. The direction of the reaction appears to depend on the levels of CER and DAG in the plasma membrane. Does not use free phosphorylcholine or CDP-choline as donors. Can also transfer phosphoethanolamine head group of phosphatidylethanolamine (PE) on to ceramide (CER) to form ceramide phosphoethanolamine (CPE). Regulates receptor-mediated signal transduction via mitogenic DAG and proapoptotic CER, as well as via SM, a structural component of membrane rafts that serve as platforms for signal transduction and protein sorting. To a lesser extent, plays a role in secretory transport via regulation of DAG pool at the Golgi apparatus and its downstream effects on PRKD1. Required for normal bone matrix mineralization. In Mus musculus (Mouse), this protein is Phosphatidylcholine:ceramide cholinephosphotransferase 2 (Sgms2).